A 649-amino-acid chain; its full sequence is Phosphomethylpyrimidine synthase (649 aa).

Residues N235, M264, Y293, H329, 349 to 351 (SRG), 390 to 393 (DGLR), and E429 each bind substrate. Residue H433 participates in Zn(2+) binding. Y456 provides a ligand contact to substrate. Position 497 (H497) interacts with Zn(2+). C577, C580, and C585 together coordinate [4Fe-4S] cluster. A disordered region spans residues 620–649 (GMRQKSQEFRDTGSELYHPAVGAKEAQLEE). The span at 621 to 632 (MRQKSQEFRDTG) shows a compositional bias: basic and acidic residues.

This sequence belongs to the ThiC family. Homodimer. Requires [4Fe-4S] cluster as cofactor.

The catalysed reaction is 5-amino-1-(5-phospho-beta-D-ribosyl)imidazole + S-adenosyl-L-methionine = 4-amino-2-methyl-5-(phosphooxymethyl)pyrimidine + CO + 5'-deoxyadenosine + formate + L-methionine + 3 H(+). Its pathway is cofactor biosynthesis; thiamine diphosphate biosynthesis. Its function is as follows. Catalyzes the synthesis of the hydroxymethylpyrimidine phosphate (HMP-P) moiety of thiamine from aminoimidazole ribotide (AIR) in a radical S-adenosyl-L-methionine (SAM)-dependent reaction. The protein is Phosphomethylpyrimidine synthase of Vibrio atlanticus (strain LGP32) (Vibrio splendidus (strain Mel32)).